We begin with the raw amino-acid sequence, 127 residues long: Small ribosomal subunit protein bS6 (127 aa).

It belongs to the bacterial ribosomal protein bS6 family.

Functionally, binds together with bS18 to 16S ribosomal RNA. The protein is Small ribosomal subunit protein bS6 of Sulfurovum sp. (strain NBC37-1).